Reading from the N-terminus, the 146-residue chain is DNA utilization protein HofO (146 aa).

The chain crosses the membrane as a helical span at residues 20 to 37; sequence WAFWLLMLVTLIFLSSTH.

The protein localises to the cell inner membrane. Its function is as follows. Required for the use of extracellular DNA as a nutrient. The sequence is that of DNA utilization protein HofO (hofO) from Escherichia coli (strain K12).